Here is a 510-residue protein sequence, read N- to C-terminus: NAD(P)H-quinone oxidoreductase subunit 2 A, chloroplastic (510 aa).

13 helical membrane-spanning segments follow: residues 24 to 44 (LLLFDGSFIFPECILIFGLIL), 57 to 77 (IPWLYFISSTSLVMSITALLF), 99 to 119 (IFQFLILLCSTLCIPLSVEYI), 124 to 144 (MAITEFLLFVLTATLGGMFLC), 149 to 169 (LITIFVAPECFSLCSYLLSGY), 183 to 203 (YLLMGGASSSILVHGFSWLYG), 227 to 247 (PGISIALIFITVGIGFKLSPA), 295 to 315 (WHLLLEILAILSMILGNLIAI), 323 to 343 (MLAYSSIGQIGYVIIGIIVGD), 354 to 374 (YMLFYISMNLGTFACIVSFGL), 395 to 415 (ALSLALCLLSLGGLPPLAGFF), 418 to 438 (LHLFWCGWQAGLYFLVSIGLL), and 484 to 504 (MIVCVIASTIPGISMNPIIAI).

The protein belongs to the complex I subunit 2 family. NDH is composed of at least 16 different subunits, 5 of which are encoded in the nucleus.

It localises to the plastid. The protein resides in the chloroplast thylakoid membrane. It catalyses the reaction a plastoquinone + NADH + (n+1) H(+)(in) = a plastoquinol + NAD(+) + n H(+)(out). It carries out the reaction a plastoquinone + NADPH + (n+1) H(+)(in) = a plastoquinol + NADP(+) + n H(+)(out). Functionally, NDH shuttles electrons from NAD(P)H:plastoquinone, via FMN and iron-sulfur (Fe-S) centers, to quinones in the photosynthetic chain and possibly in a chloroplast respiratory chain. The immediate electron acceptor for the enzyme in this species is believed to be plastoquinone. Couples the redox reaction to proton translocation, and thus conserves the redox energy in a proton gradient. This Vitis vinifera (Grape) protein is NAD(P)H-quinone oxidoreductase subunit 2 A, chloroplastic.